The chain runs to 116 residues: Large ribosomal subunit protein eL22A (116 aa).

The protein belongs to the eukaryotic ribosomal protein eL22 family.

In Dictyostelium discoideum (Social amoeba), this protein is Large ribosomal subunit protein eL22A (rpl22).